Reading from the N-terminus, the 250-residue chain is Hydroxyethylthiazole kinase (250 aa).

M39 serves as a coordination point for substrate. ATP contacts are provided by R114 and T159. Position 186 (G186) interacts with substrate.

Belongs to the Thz kinase family. Requires Mg(2+) as cofactor.

It catalyses the reaction 5-(2-hydroxyethyl)-4-methylthiazole + ATP = 4-methyl-5-(2-phosphooxyethyl)-thiazole + ADP + H(+). It functions in the pathway cofactor biosynthesis; thiamine diphosphate biosynthesis; 4-methyl-5-(2-phosphoethyl)-thiazole from 5-(2-hydroxyethyl)-4-methylthiazole: step 1/1. Functionally, catalyzes the phosphorylation of the hydroxyl group of 4-methyl-5-beta-hydroxyethylthiazole (THZ). The chain is Hydroxyethylthiazole kinase from Lactococcus lactis subsp. lactis (strain IL1403) (Streptococcus lactis).